Reading from the N-terminus, the 416-residue chain is Glutamyl-tRNA reductase (416 aa).

Substrate contacts are provided by residues 49-52, Ser-105, 110-112, and Gln-116; these read TCNR and EPQ. Cys-50 serves as the catalytic Nucleophile. 185–190 provides a ligand contact to NADP(+); it reads GAGETI.

It belongs to the glutamyl-tRNA reductase family. As to quaternary structure, homodimer.

It catalyses the reaction (S)-4-amino-5-oxopentanoate + tRNA(Glu) + NADP(+) = L-glutamyl-tRNA(Glu) + NADPH + H(+). It participates in porphyrin-containing compound metabolism; protoporphyrin-IX biosynthesis; 5-aminolevulinate from L-glutamyl-tRNA(Glu): step 1/2. Functionally, catalyzes the NADPH-dependent reduction of glutamyl-tRNA(Glu) to glutamate 1-semialdehyde (GSA). The sequence is that of Glutamyl-tRNA reductase from Shewanella denitrificans (strain OS217 / ATCC BAA-1090 / DSM 15013).